The primary structure comprises 205 residues: Large ribosomal subunit protein uL3 (205 aa).

The interval 126 to 150 (GGPKTHGQSDRHRAPGSISSTTTPG) is disordered.

The protein belongs to the universal ribosomal protein uL3 family. In terms of assembly, part of the 50S ribosomal subunit. Forms a cluster with proteins L14 and L19.

Its function is as follows. One of the primary rRNA binding proteins, it binds directly near the 3'-end of the 23S rRNA, where it nucleates assembly of the 50S subunit. The polypeptide is Large ribosomal subunit protein uL3 (Dehalococcoides mccartyi (strain ATCC BAA-2266 / KCTC 15142 / 195) (Dehalococcoides ethenogenes (strain 195))).